We begin with the raw amino-acid sequence, 96 residues long: (4S)-4-hydroxy-5-phosphonooxypentane-2,3-dione isomerase (96 aa).

Residues 2 to 91 (HVTLVEINVH…MTGPRTKKVF (90 aa)) form the ABM domain.

Belongs to the LsrG family. As to quaternary structure, homodimer.

The protein resides in the cytoplasm. The catalysed reaction is (2S)-2-hydroxy-3,4-dioxopentyl phosphate = 3-hydroxy-2,4-dioxopentyl phosphate. Functionally, involved in the degradation of phospho-AI-2, thereby terminating induction of the lsr operon and closing the AI-2 signaling cycle. Catalyzes the conversion of (4S)-4-hydroxy-5-phosphonooxypentane-2,3-dione (P-DPD) to 3-hydroxy-5-phosphonooxypentane-2,4-dione (P-HPD). This is (4S)-4-hydroxy-5-phosphonooxypentane-2,3-dione isomerase from Salmonella typhimurium (strain LT2 / SGSC1412 / ATCC 700720).